A 146-amino-acid polypeptide reads, in one-letter code: VHWTAEEKQLITGLWGKVNVADCGAEALARLLIVYPWTQRFFASFGNLSSPTAILGNPMVRAHGKKVLTSFGEAVKNLDNIKNTFAQLSELHCDKLHVDPENFRLLGDILIIVLAAHFGKDFTPECQAALQKLVRVVAHALARKYH.

The Globin domain maps to 2–146 (HWTAEEKQLI…VAHALARKYH (145 aa)). Heme b is bound by residues His63 and His92.

The protein belongs to the globin family. In terms of assembly, heterotetramer of two alpha chains and two beta chains. In terms of tissue distribution, red blood cells.

In terms of biological role, involved in oxygen transport from the lung to the various peripheral tissues. The sequence is that of Hemoglobin subunit beta (HBB) from Ara ararauna (Blue-and-yellow macaw).